Consider the following 188-residue polypeptide: Probable manganese efflux pump MntP (188 aa).

5 helical membrane-spanning segments follow: residues 3–23 (ITAT…ASIG), 66–86 (LEWN…RMII), 106–128 (WLLV…GLAF), 143–163 (ATLI…SIIG), and 168–188 (ILGG…HFHG).

It belongs to the MntP (TC 9.B.29) family.

Its subcellular location is the cell inner membrane. Functionally, probably functions as a manganese efflux pump. The chain is Probable manganese efflux pump MntP from Shigella flexneri serotype 5b (strain 8401).